Here is a 156-residue protein sequence, read N- to C-terminus: Small ribosomal subunit protein uS7 (156 aa).

It belongs to the universal ribosomal protein uS7 family. Part of the 30S ribosomal subunit. Contacts proteins S9 and S11.

Its function is as follows. One of the primary rRNA binding proteins, it binds directly to 16S rRNA where it nucleates assembly of the head domain of the 30S subunit. Is located at the subunit interface close to the decoding center, probably blocks exit of the E-site tRNA. This Buchnera aphidicola subsp. Cinara cedri (strain Cc) protein is Small ribosomal subunit protein uS7.